The chain runs to 219 residues: Probable nicotinate-nucleotide adenylyltransferase (219 aa).

This sequence belongs to the NadD family.

It carries out the reaction nicotinate beta-D-ribonucleotide + ATP + H(+) = deamido-NAD(+) + diphosphate. The protein operates within cofactor biosynthesis; NAD(+) biosynthesis; deamido-NAD(+) from nicotinate D-ribonucleotide: step 1/1. Catalyzes the reversible adenylation of nicotinate mononucleotide (NaMN) to nicotinic acid adenine dinucleotide (NaAD). This is Probable nicotinate-nucleotide adenylyltransferase from Herminiimonas arsenicoxydans.